Here is a 389-residue protein sequence, read N- to C-terminus: Succinate--CoA ligase [ADP-forming] subunit beta (389 aa).

Positions 9–244 constitute an ATP-grasp domain; the sequence is KELLRQFNVP…IDEEDAAEIE (236 aa). ATP-binding positions include Lys46, 53–55, Glu99, Ala102, and Glu107; that span reads GRG. Positions 199 and 213 each coordinate Mg(2+). Substrate contacts are provided by residues Asn264 and 321-323; that span reads GIM.

It belongs to the succinate/malate CoA ligase beta subunit family. As to quaternary structure, heterotetramer of two alpha and two beta subunits. The cofactor is Mg(2+).

It catalyses the reaction succinate + ATP + CoA = succinyl-CoA + ADP + phosphate. The enzyme catalyses GTP + succinate + CoA = succinyl-CoA + GDP + phosphate. It participates in carbohydrate metabolism; tricarboxylic acid cycle; succinate from succinyl-CoA (ligase route): step 1/1. Functionally, succinyl-CoA synthetase functions in the citric acid cycle (TCA), coupling the hydrolysis of succinyl-CoA to the synthesis of either ATP or GTP and thus represents the only step of substrate-level phosphorylation in the TCA. The beta subunit provides nucleotide specificity of the enzyme and binds the substrate succinate, while the binding sites for coenzyme A and phosphate are found in the alpha subunit. The chain is Succinate--CoA ligase [ADP-forming] subunit beta from Polynucleobacter asymbioticus (strain DSM 18221 / CIP 109841 / QLW-P1DMWA-1) (Polynucleobacter necessarius subsp. asymbioticus).